Here is a 61-residue protein sequence, read N- to C-terminus: Large ribosomal subunit protein eL24 (61 aa).

C7, C10, C33, and C37 together coordinate Zn(2+). Residues 7–37 (CSFCGGDIPPATGMMHVRNDGTILWFCSNKC) form a C4-type zinc finger.

Belongs to the eukaryotic ribosomal protein eL24 family. As to quaternary structure, part of the 50S ribosomal subunit. Forms a cluster with proteins L3 and L14. Zn(2+) serves as cofactor.

In terms of biological role, binds to the 23S rRNA. The chain is Large ribosomal subunit protein eL24 from Metallosphaera sedula (strain ATCC 51363 / DSM 5348 / JCM 9185 / NBRC 15509 / TH2).